We begin with the raw amino-acid sequence, 1292 residues long: Myosin-1 (1292 aa).

The region spanning 35–714 (VGVSDLTLLS…TLFALENMRD (680 aa)) is the Myosin motor domain. 128–135 (GESGAGKT) provides a ligand contact to ATP. Ser-356 carries the post-translational modification Phosphoserine. Residues 403-485 (SIGILDIYGF…PGIFAALNDS (83 aa)) form an actin-binding region. IQ domains follow at residues 718-738 (HNMASRIQRAWRRFLQRRIDS) and 739-764 (AIRIQRAIREMKHGNQFEQLRDYGNK). Residues 770–960 (KERRAMSLLG…TIMVRRGRPG (191 aa)) enclose the TH1 domain. Disordered stretches follow at residues 956–991 (RGRPGNCSQRKKPLSTRLPDTYTTRETGYKNAGHPT), 1017–1180 (YSLN…FPLK), and 1227–1258 (PVASSAPLGNSGVATREAGTTSAATAAASAAT). The segment covering 1062–1081 (MDNSSAAYGNASALPNSAPS) has biased composition (polar residues). 2 stretches are compositionally biased toward pro residues: residues 1087 to 1121 (ASRPVPKPAPRPGPKPGPKPGPKPGPKPAPKPMPR) and 1142 to 1155 (APPPPPPPPPPPAA). Positions 1157 to 1219 (PSEPVYEAAF…PTAYIVESKA (63 aa)) constitute an SH3 domain. Residues 1240–1258 (ATREAGTTSAATAAASAAT) are compositionally biased toward low complexity.

It belongs to the TRAFAC class myosin-kinesin ATPase superfamily. Myosin family. In terms of processing, phosphorylation of the TEDS site (Ser-356) is required for the polarization of the actin cytoskeleton. Phosphorylation probably activates the myosin-I ATPase activity.

It localises to the cytoplasm. The protein resides in the cytoskeleton. Its subcellular location is the actin patch. Its function is as follows. Type-I myosin implicated in the organization of the actin cytoskeleton. Required for proper actin cytoskeleton polarization. At the cell cortex, assembles in patch-like structures together with proteins from the actin-polymerizing machinery and promotes actin assembly. Functions as actin nucleation-promoting factor (NPF) for the Arp2/3 complex. The polypeptide is Myosin-1 (MYO1) (Eremothecium gossypii (strain ATCC 10895 / CBS 109.51 / FGSC 9923 / NRRL Y-1056) (Yeast)).